A 310-amino-acid chain; its full sequence is Putative S-adenosyl-L-methionine-dependent methyltransferase MMAR_0356 (310 aa).

S-adenosyl-L-methionine-binding positions include D137 and 166–167 (DL).

Belongs to the UPF0677 family.

Its function is as follows. Exhibits S-adenosyl-L-methionine-dependent methyltransferase activity. In Mycobacterium marinum (strain ATCC BAA-535 / M), this protein is Putative S-adenosyl-L-methionine-dependent methyltransferase MMAR_0356.